The primary structure comprises 20 residues: Serum amyloid P-component (20 aa).

Positions 1-20 (ZPIDLMGKVFVFDKELSPBI) constitute a Pentraxin (PTX) domain.

Belongs to the pentraxin family. In terms of assembly, homopentamer. Pentraxin (or pentaxin) have a discoid arrangement of 5 non-covalently bound subunits.

The protein resides in the secreted. The sequence is that of Serum amyloid P-component from Pleuronectes platessa (European plaice).